Here is a 393-residue protein sequence, read N- to C-terminus: MSMKQRVIIVGGGPVGLLTALGLAKAGTNVVVLEAESQPSDSPRALVYHFPVLPHLKRLGVLDDCVAAGLMRQNFAWRVHSTSEMIFWDLSCLEGDVELPYALHLGQDKLSRILIEHLKALPNVEVRYSSPVVDCEVGPRSVRVVLGGESPGVIVEGDWLIGADGANSFVRREVLNQNFFGITWPQRYVATNTRFDFDKLGFGKTTMQVDDVYGSVICNIDADSLWRVTFMEDPNLPMEGIRGRIDQVFKELLPTNDPYEVVAFSPYRMHQRVTDRMRNGRVILIGDAAHVTNPTGGLGLTGGMFDAFALTSVLNQVIHDGRSEDILDVFEADRRRKFIELVSPRASDNLRNLYHQKPGEGKNDWVNNTRSISKDIDRMRDALRFPETMETFL.

Residues R6–A35 and M277–D287 each bind FAD.

Belongs to the PheA/TfdB FAD monooxygenase family. Homodimer. FAD serves as cofactor.

The catalysed reaction is 4-(6-hydroxypyridin-3-yl)-4-oxobutanoate + 2 NADH + O2 + 2 H(+) = 2,5-dihydroxypyridine + succinate semialdehyde + 2 NAD(+) + H2O. The protein operates within alkaloid degradation; nicotine degradation. With respect to regulation, inhibited by Cu(2+) and Zn(2+). Involved in the nicotine degradation. Catalyzes the cleavage of 6-hydroxy-3-succinoylpyridine (HSP) by incorporation of oxygen at the 3-position to produce to 2,5-dihydroxypyridine (DHP) and succinic semialdehyde. This Pseudomonas putida (strain DSM 28022 / S16) protein is 6-hydroxy-3-succinoylpyridine 3-monooxygenase HspB.